Here is a 352-residue protein sequence, read N- to C-terminus: Spermidine/putrescine import ATP-binding protein PotA (352 aa).

An ABC transporter domain is found at 7–237 (IRLENVTKSF…PVNAFVADFI (231 aa)). 39 to 46 (GPSGCGKT) serves as a coordination point for ATP.

It belongs to the ABC transporter superfamily. Spermidine/putrescine importer (TC 3.A.1.11.1) family. In terms of assembly, the complex is composed of two ATP-binding proteins (PotA), two transmembrane proteins (PotB and PotC) and a solute-binding protein (PotD).

The protein resides in the cell membrane. It carries out the reaction ATP + H2O + polyamine-[polyamine-binding protein]Side 1 = ADP + phosphate + polyamineSide 2 + [polyamine-binding protein]Side 1.. Functionally, part of the ABC transporter complex PotABCD involved in spermidine/putrescine import. Responsible for energy coupling to the transport system. In Acetivibrio thermocellus (strain ATCC 27405 / DSM 1237 / JCM 9322 / NBRC 103400 / NCIMB 10682 / NRRL B-4536 / VPI 7372) (Clostridium thermocellum), this protein is Spermidine/putrescine import ATP-binding protein PotA.